A 160-amino-acid chain; its full sequence is Ribosomal RNA large subunit methyltransferase H (160 aa).

S-adenosyl-L-methionine contacts are provided by residues L76, G108, and L127–W132.

Belongs to the RNA methyltransferase RlmH family. Homodimer.

The protein resides in the cytoplasm. The enzyme catalyses pseudouridine(1915) in 23S rRNA + S-adenosyl-L-methionine = N(3)-methylpseudouridine(1915) in 23S rRNA + S-adenosyl-L-homocysteine + H(+). In terms of biological role, specifically methylates the pseudouridine at position 1915 (m3Psi1915) in 23S rRNA. In Sinorhizobium medicae (strain WSM419) (Ensifer medicae), this protein is Ribosomal RNA large subunit methyltransferase H.